The sequence spans 249 residues: Mannose-binding protein A (249 aa).

An N-terminal signal peptide occupies residues 1–20 (MLLFSSLPVLLLCVVTASYS). Residues 41–102 (VTNGTPGRDG…KGDPGDTSGV (62 aa)) form a disordered region. A compositionally biased stretch (basic and acidic residues) spans 48–60 (RDGRDGPKGEKGE). A 4-hydroxyproline modification is found at P54. K55 and K58 each carry 5-hydroxylysine. 2 O-linked (Gal...) hydroxylysine glycosylation sites follow: K55 and K58. Residues P61, P72, P78, and P89 each carry the 4-hydroxyproline modification. A Collagen-like domain is found at 64–98 (GFRGSQGPPGKMGPPGNIGETGPLGPKGQKGDPGD). 5-hydroxylysine occurs at positions 90 and 93. O-linked (Gal...) hydroxylysine glycans are attached at residues K90 and K93. One can recognise a C-type lectin domain in the interval 135-246 (SRKKLYVTNG…CSSSFLAVCE (112 aa)). 2 disulfides stabilise this stretch: C156/C245 and C223/C237. Ca(2+) is bound by residues D189, E193, E213, N215, D216, E221, D222, N233, and D234. The segment at 213–221 (EPNDHGSGE) is calcium-dependent carbohydrate binding.

As to quaternary structure, interacts with MASP1 and MASP2. Forms oligomeric complexes of 3, 4, 5 or, predominantly, 6 homotrimers. The homotrimers appear as globular heads that are connected to a central hub by thin stalks. Hydroxylated on lysine and proline residues within the collagen-like domain. In terms of processing, O-glycosylated. O-linked glycans on hydroxylysine residues consist of Glc-Gal disaccharides bound to the oxygen atom of post-translationally added hydroxyl groups. Detected in blood serum (at protein level). Expressed in liver. Weakly expressed in lung, testis and brain. Not detected in bone marrow and heart.

Its subcellular location is the secreted. In terms of biological role, calcium-dependent lectin. Plays a role in the innate immune response by binding mannose, fucose and N-acetylglucosamine on bacteria, including strains of A.suis, H.parasuis and A.pleuropneumoniae, and activates the lectin complement pathway. According to some authors, it only binds mannose. The protein is Mannose-binding protein A of Sus scrofa (Pig).